A 308-amino-acid polypeptide reads, in one-letter code: Putative S-adenosyl-L-methionine-dependent methyltransferase Mb3816c (308 aa).

S-adenosyl-L-methionine is bound by residues D131 and 160–161 (DL).

It belongs to the UPF0677 family.

Its function is as follows. Exhibits S-adenosyl-L-methionine-dependent methyltransferase activity. The polypeptide is Putative S-adenosyl-L-methionine-dependent methyltransferase Mb3816c (Mycobacterium bovis (strain ATCC BAA-935 / AF2122/97)).